We begin with the raw amino-acid sequence, 629 residues long: Probable alpha-L-arabinofuranosidase A (629 aa).

Residues 1–25 (MVALSTLSGLSALPFLFSLVQNVYG) form the signal peptide. Residues Asn36, Asn51, Asn140, Asn152, Asn168, Asn171, Asn260, Asn494, and Asn534 are each glycosylated (N-linked (GlcNAc...) asparagine).

Belongs to the glycosyl hydrolase 51 family.

It is found in the secreted. It carries out the reaction Hydrolysis of terminal non-reducing alpha-L-arabinofuranoside residues in alpha-L-arabinosides.. The protein operates within glycan metabolism; L-arabinan degradation. In terms of biological role, alpha-L-arabinofuranosidase involved in the degradation of arabinoxylan, a major component of plant hemicellulose. Acts only on small linear 1,5-alpha-linked L-arabinofuranosyl oligosaccharides. The chain is Probable alpha-L-arabinofuranosidase A (abfA) from Aspergillus flavus (strain ATCC 200026 / FGSC A1120 / IAM 13836 / NRRL 3357 / JCM 12722 / SRRC 167).